The following is a 520-amino-acid chain: Tubby-related protein 2 (520 aa).

Phosphoserine is present on residues serine 135 and serine 190. The tract at residues 141–236 (EVSVENGSVS…GTNSSAAHNE (96 aa)) is disordered. Residues 211–223 (QKEEDLEKKREAS) show a composition bias toward basic and acidic residues. The segment covering 224-233 (ESTGTNSSAA) has biased composition (polar residues).

The protein belongs to the TUB family. As to expression, strongly expressed in testis. Also expressed in retina. Expressed in cancer cell lines.

The protein localises to the cytoplasm. The protein resides in the secreted. This Homo sapiens (Human) protein is Tubby-related protein 2 (TULP2).